A 408-amino-acid chain; its full sequence is tRNA pseudouridine synthase D (408 aa).

The active-site Nucleophile is Asp76. One can recognise a TRUD domain in the interval 149-362 (GFINYYDSQR…NSFERKVRIL (214 aa)).

Belongs to the pseudouridine synthase TruD family.

The catalysed reaction is uridine(13) in tRNA = pseudouridine(13) in tRNA. Responsible for synthesis of pseudouridine from uracil-13 in transfer RNAs. The polypeptide is tRNA pseudouridine synthase D (Leptospira interrogans serogroup Icterohaemorrhagiae serovar Lai (strain 56601)).